We begin with the raw amino-acid sequence, 293 residues long: Elongation factor Ts (293 aa).

The tract at residues 80 to 83 (TDFV) is involved in Mg(2+) ion dislocation from EF-Tu.

It belongs to the EF-Ts family.

The protein resides in the cytoplasm. Associates with the EF-Tu.GDP complex and induces the exchange of GDP to GTP. It remains bound to the aminoacyl-tRNA.EF-Tu.GTP complex up to the GTP hydrolysis stage on the ribosome. This chain is Elongation factor Ts, found in Aeromonas salmonicida (strain A449).